We begin with the raw amino-acid sequence, 380 residues long: Cytochrome b (380 aa).

A run of 4 helical transmembrane segments spans residues 34-54 (FGSL…LLAM), 78-99 (WLIR…YMHI), 114-134 (WNTG…GYVL), and 179-199 (FFAL…IHLT). Positions 84 and 98 each coordinate heme b. Positions 183 and 197 each coordinate heme b. Residue His202 coordinates a ubiquinone. The next 4 helical transmembrane spans lie at 227–247 (LKDI…ALFS), 289–309 (LGGV…PLLH), 321–341 (LSQL…WIGS), and 348–368 (FIII…ILFP).

The protein belongs to the cytochrome b family. The cytochrome bc1 complex contains 11 subunits: 3 respiratory subunits (MT-CYB, CYC1 and UQCRFS1), 2 core proteins (UQCRC1 and UQCRC2) and 6 low-molecular weight proteins (UQCRH/QCR6, UQCRB/QCR7, UQCRQ/QCR8, UQCR10/QCR9, UQCR11/QCR10 and a cleavage product of UQCRFS1). This cytochrome bc1 complex then forms a dimer. Heme b serves as cofactor.

The protein localises to the mitochondrion inner membrane. Functionally, component of the ubiquinol-cytochrome c reductase complex (complex III or cytochrome b-c1 complex) that is part of the mitochondrial respiratory chain. The b-c1 complex mediates electron transfer from ubiquinol to cytochrome c. Contributes to the generation of a proton gradient across the mitochondrial membrane that is then used for ATP synthesis. The polypeptide is Cytochrome b (MT-CYB) (Oceanodroma furcata (Fork-tailed storm-petrel)).